A 451-amino-acid chain; its full sequence is AAA-ATPase At3g28570, mitochondrial (451 aa).

Residues 1 to 48 constitute a mitochondrion transit peptide; that stretch reads MFAENLTRIGSNVAGLFFVWSTLKRYFPRQIQQLLFNAIQRIPIFKRL. Position 243–250 (243–250) interacts with ATP; that stretch reads GPPGTGKS.

This sequence belongs to the AAA ATPase family. BCS1 subfamily. Mg(2+) serves as cofactor.

The protein resides in the mitochondrion. The enzyme catalyses ATP + H2O = ADP + phosphate + H(+). This chain is AAA-ATPase At3g28570, mitochondrial, found in Arabidopsis thaliana (Mouse-ear cress).